Reading from the N-terminus, the 416-residue chain is Enterobactin exporter EntS (416 aa).

Residues 1–21 (MNKQSWLLNLSLLKTHPAFRA) are Cytoplasmic-facing. The helical transmembrane segment at 22–42 (VFLARFISIVSLGLLGVAVPV) threads the bilayer. The Periplasmic portion of the chain corresponds to 43-55 (QIQMMTHSTWQVG). Residues 56-76 (LSVTLTGGAMFVGLMVGGVLA) form a helical membrane-spanning segment. Topologically, residues 77–83 (DRYERKK) are cytoplasmic. Residues 84 to 104 (VILLARGTCGIGFIGLCLNAL) traverse the membrane as a helical segment. Residues 105-109 (LPEPS) are Periplasmic-facing. Residues 110–130 (LLAIYLLGLWDGFFASLGVTA) traverse the membrane as a helical segment. Residues 131 to 156 (LLAATPALVGRENLMQAGAITMLTVR) are Cytoplasmic-facing. Residues 157–177 (LGSVISPMIGGLLLATGGVAW) traverse the membrane as a helical segment. A topological domain (periplasmic) is located at residue N178. Residues 179–199 (YGLAAAGTFITLLPLLSLPAL) form a helical membrane-spanning segment. The Cytoplasmic segment spans residues 200 to 218 (PPPPQPREHPLKSLLAGFR). A helical transmembrane segment spans residues 219-239 (FLLASPLVGGIALLGGLLTMA). The Periplasmic segment spans residues 240–256 (SAVRVLYPALADNWQMS). A helical membrane pass occupies residues 257–277 (AAQIGFLYAAIPLGAAIGALT). Residues 278–287 (SGKLAHSARP) lie on the Cytoplasmic side of the membrane. A helical transmembrane segment spans residues 288–307 (GLLMLLSTLGSFLAIGLFGL). Topologically, residues 308-313 (MPMWIL) are periplasmic. A helical membrane pass occupies residues 314 to 336 (GVVCLALFGWLSAVSSLLQYTML). At 337–356 (QTQTPEAMLGRINGLWTAQN) the chain is on the cytoplasmic side. Residues 357-377 (VTGDAIGAALLGGLGAMMTPV) traverse the membrane as a helical segment. A topological domain (periplasmic) is located at residue A378. The helical transmembrane segment at 379-399 (SASASGFGLLIIGVLLLLVLV) threads the bilayer. Topologically, residues 400–416 (ELRRFRQTPPQVTASDS) are cytoplasmic.

It belongs to the major facilitator superfamily. EntS (TC 2.A.1.38) family.

Its subcellular location is the cell inner membrane. In terms of biological role, component of an export pathway for enterobactin. This Escherichia coli (strain 55989 / EAEC) protein is Enterobactin exporter EntS.